A 196-amino-acid polypeptide reads, in one-letter code: Nucleoid occlusion factor SlmA (196 aa).

Positions 7 to 68 (PNRRDEILQA…GLIEFIEESI (62 aa)) constitute an HTH tetR-type domain. Positions 31–50 (TTAKLAKQVGVSEAALYRHF) form a DNA-binding region, H-T-H motif. The stretch at 71–93 (RVNRILEDEKDTLKRIELLLKLL) forms a coiled coil.

It belongs to the nucleoid occlusion factor SlmA family. As to quaternary structure, homodimer. Interacts with FtsZ.

It is found in the cytoplasm. The protein localises to the nucleoid. Required for nucleoid occlusion (NO) phenomenon, which prevents Z-ring formation and cell division over the nucleoid. Acts as a DNA-associated cell division inhibitor that binds simultaneously chromosomal DNA and FtsZ, and disrupts the assembly of FtsZ polymers. SlmA-DNA-binding sequences (SBS) are dispersed on non-Ter regions of the chromosome, preventing FtsZ polymerization at these regions. The protein is Nucleoid occlusion factor SlmA of Aliivibrio fischeri (strain MJ11) (Vibrio fischeri).